A 267-amino-acid polypeptide reads, in one-letter code: 4-hydroxy-tetrahydrodipicolinate reductase (267 aa).

NAD(+)-binding positions include glycine 8–methionine 13 and aspartate 34. Arginine 35 lines the NADP(+) pocket. Residues glycine 98–threonine 100 and alanine 122–phenylalanine 125 each bind NAD(+). Residue histidine 155 is the Proton donor/acceptor of the active site. Residue histidine 156 coordinates (S)-2,3,4,5-tetrahydrodipicolinate. Lysine 159 functions as the Proton donor in the catalytic mechanism. Glycine 165 to threonine 166 provides a ligand contact to (S)-2,3,4,5-tetrahydrodipicolinate.

It belongs to the DapB family.

Its subcellular location is the cytoplasm. The catalysed reaction is (S)-2,3,4,5-tetrahydrodipicolinate + NAD(+) + H2O = (2S,4S)-4-hydroxy-2,3,4,5-tetrahydrodipicolinate + NADH + H(+). It catalyses the reaction (S)-2,3,4,5-tetrahydrodipicolinate + NADP(+) + H2O = (2S,4S)-4-hydroxy-2,3,4,5-tetrahydrodipicolinate + NADPH + H(+). Its pathway is amino-acid biosynthesis; L-lysine biosynthesis via DAP pathway; (S)-tetrahydrodipicolinate from L-aspartate: step 4/4. Functionally, catalyzes the conversion of 4-hydroxy-tetrahydrodipicolinate (HTPA) to tetrahydrodipicolinate. The chain is 4-hydroxy-tetrahydrodipicolinate reductase from Pseudomonas entomophila (strain L48).